A 632-amino-acid chain; its full sequence is Cytoplasmic polyadenylation element-binding protein 3 (632 aa).

Basic and acidic residues predominate over residues 1–11 (MQDDLLMDKSK). Disordered stretches follow at residues 1-89 (MQDD…TGGS) and 127-212 (FSPQ…RRAV). The segment covering 13–48 (QQRQQPQQPPSSQTQQQQKEAASVAEPPSSRESSPP) has biased composition (low complexity). Polar residues-rich tracts occupy residues 65–89 (SFQQ…TGGS) and 135–169 (HQTQ…LTNK). Residues 170-193 (PSSSPNSSSPSPSNWNNQQNAAWN) show a composition bias toward low complexity. RRM domains are found at residues 375-466 (RKVF…PWNL) and 483-565 (KTIF…PYVL).

Belongs to the RRM CPEB family. In terms of assembly, following synaptic activity, forms amyloid-like oligomers. Aggregation requires an intact actin cytoskeleton. In embryos, expressed in the central nervous system, and intermediate and distal pronephric tubule segments of the embryonic kidney.

It is found in the cytoplasm. It localises to the nucleus. The protein resides in the synapse. The protein localises to the cell projection. Its subcellular location is the dendrite. It is found in the postsynaptic density. Its function is as follows. Sequence-specific RNA-binding protein which acts as a translational repressor in the basal unstimulated state but, following neuronal stimulation, acts as a translational activator. Does not bind to the cytoplasmic polyadenylation element (CPE), a uridine-rich sequence element within the mRNA 3'-UTR, but binds to a U-rich loop within a stem-loop structure. Required for the consolidation and maintenance of hippocampal-based long term memory. Inhibits differentiation of intermediate mesoderm from an early stage to inhibit pronephric differentiation but induce neural differentiation. This is Cytoplasmic polyadenylation element-binding protein 3 (cpeb3) from Xenopus tropicalis (Western clawed frog).